The primary structure comprises 367 residues: 2-aminoethylphosphonate--pyruvate transaminase (367 aa).

Lysine 194 carries the N6-(pyridoxal phosphate)lysine modification.

It belongs to the class-V pyridoxal-phosphate-dependent aminotransferase family. PhnW subfamily. As to quaternary structure, homodimer. Requires pyridoxal 5'-phosphate as cofactor.

It carries out the reaction (2-aminoethyl)phosphonate + pyruvate = phosphonoacetaldehyde + L-alanine. Functionally, involved in phosphonate degradation. The sequence is that of 2-aminoethylphosphonate--pyruvate transaminase from Klebsiella pneumoniae subsp. pneumoniae (strain ATCC 700721 / MGH 78578).